A 77-amino-acid chain; its full sequence is NADH dehydrogenase [ubiquinone] 1 alpha subcomplex subunit 3 (77 aa).

Residues 23–45 (IVGGSALALAGIVMATIGVANYY) form a helical membrane-spanning segment.

It belongs to the complex I NDUFA3 subunit family. In terms of assembly, complex I is composed of 43 different subunits.

It is found in the mitochondrion inner membrane. The protein resides in the cytoplasm. The protein localises to the myofibril. Its subcellular location is the sarcomere. It localises to the z line. Its function is as follows. Accessory subunit of the mitochondrial membrane respiratory chain NADH dehydrogenase (Complex I), that is believed not to be involved in catalysis. Complex I functions in the transfer of electrons from NADH to the respiratory chain. The immediate electron acceptor for the enzyme is believed to be ubiquinone. Required for the maintenance of muscle integrity and for cell proliferation in the wing imaginal disc epithelium, possibly by interacting with the chaperone-assisted selective autophagy (CASA) pathway. In Drosophila melanogaster (Fruit fly), this protein is NADH dehydrogenase [ubiquinone] 1 alpha subcomplex subunit 3.